A 266-amino-acid chain; its full sequence is Diphthine synthase (266 aa).

S-adenosyl-L-methionine contacts are provided by residues leucine 9, aspartate 84, valine 87, 112–113, leucine 169, alanine 210, and histidine 235; that span reads SI.

This sequence belongs to the diphthine synthase family. Homodimer.

It carries out the reaction 2-[(3S)-amino-3-carboxypropyl]-L-histidyl-[translation elongation factor 2] + 3 S-adenosyl-L-methionine = diphthine-[translation elongation factor 2] + 3 S-adenosyl-L-homocysteine + 3 H(+). Its pathway is protein modification; peptidyl-diphthamide biosynthesis. Its function is as follows. S-adenosyl-L-methionine-dependent methyltransferase that catalyzes the trimethylation of the amino group of the modified target histidine residue in translation elongation factor 2 (EF-2), to form an intermediate called diphthine. The three successive methylation reactions represent the second step of diphthamide biosynthesis. This chain is Diphthine synthase, found in Methanosarcina mazei (strain ATCC BAA-159 / DSM 3647 / Goe1 / Go1 / JCM 11833 / OCM 88) (Methanosarcina frisia).